Reading from the N-terminus, the 1104-residue chain is Protein transport protein SEC31 homolog B (1104 aa).

7 WD repeats span residues 5–45 (KGVG…EIFK), 62–109 (PSSE…GSQP), 120–160 (VHKG…EPSH), 170–210 (ATQG…PIIN), 214–257 (SVRR…SPVR), 261–301 (GHQR…IVAE), and 304–344 (AGNN…RYGV). Residue threonine 526 is modified to Phosphothreonine. The disordered stretch occupies residues 527 to 562 (PVSTSAKDFMPSDTDFSTKGEETQEMQEEEEESSDP). Acidic residues predominate over residues 549-560 (TQEMQEEEEESS). A WD 8 repeat occupies 662-707 (TLCDALASKLMAAGNTLAAVLCYICAGNVDRTVEIWSRSLANERDG). 4 disordered regions span residues 782–811 (LSAE…PTQA), 851–874 (HQAQ…PSMR), 892–931 (QQPT…QYPN), and 952–994 (TPGV…SNVP). Polar residues-rich tracts occupy residues 786 to 811 (PETN…PTQA), 863 to 874 (PAPTSNAQPSMR), and 892 to 908 (QQPT…SNNA). Low complexity predominate over residues 959 to 977 (SVQPASPPTQQAAAQAAPA).

It belongs to the WD repeat SEC31 family. As to quaternary structure, interacts with SEC13A and SEC13B.

The protein resides in the golgi apparatus. Its subcellular location is the endoplasmic reticulum. In terms of biological role, required for protein transport from the endoplasmic reticulum to the Golgi apparatus. This chain is Protein transport protein SEC31 homolog B, found in Arabidopsis thaliana (Mouse-ear cress).